Reading from the N-terminus, the 369-residue chain is Anhydro-N-acetylmuramic acid kinase (369 aa).

12-19 (GTSMDGVD) provides a ligand contact to ATP.

Belongs to the anhydro-N-acetylmuramic acid kinase family.

The enzyme catalyses 1,6-anhydro-N-acetyl-beta-muramate + ATP + H2O = N-acetyl-D-muramate 6-phosphate + ADP + H(+). Its pathway is amino-sugar metabolism; 1,6-anhydro-N-acetylmuramate degradation. It participates in cell wall biogenesis; peptidoglycan recycling. Its function is as follows. Catalyzes the specific phosphorylation of 1,6-anhydro-N-acetylmuramic acid (anhMurNAc) with the simultaneous cleavage of the 1,6-anhydro ring, generating MurNAc-6-P. Is required for the utilization of anhMurNAc either imported from the medium or derived from its own cell wall murein, and thus plays a role in cell wall recycling. This Shewanella oneidensis (strain ATCC 700550 / JCM 31522 / CIP 106686 / LMG 19005 / NCIMB 14063 / MR-1) protein is Anhydro-N-acetylmuramic acid kinase.